A 249-amino-acid polypeptide reads, in one-letter code: MNKKKLKAHFFVLYIICSCFILILSIKHDKYNNESKKKKKFFKIRTKIIFYKLKKVNQIKNAPQLYIQFYKPKCHKTTQSLKDIFNELSGNKNPENPKNIDEYNLTPKLKKTVELFQSMPNSPYYKSQQVILMGKKISSMPDKHKIRQNQVLGCQSVVYIYPKVEENEDKKKVIVWLGHSDGLLTKGIVYILTDGLSGYMPEDILKVNPNFITLTGISEFLTMSRINGYLNIMNKIKIFCTNILKNMDN.

C154 (cysteine persulfide intermediate) is an active-site residue.

The protein belongs to the SufE family. In terms of assembly, monomer. Interacts with SufS; interaction enhances cysteine desulfurase activity of SufS. Post-translationally, proteolytically cleaved.

Its subcellular location is the plastid. The protein localises to the apicoplast. The protein operates within cofactor biosynthesis; iron-sulfur cluster biosynthesis. Participates in sulfur mobilization (SUF) pathway for iron-sulfur (Fe-S) cluster biogenesis. Enhances cysteine desulfurase activity of SufS. Probably functions as a sulfur acceptor for SufS. This Plasmodium falciparum (isolate 3D7) protein is Cysteine desulfuration protein SufE.